Here is a 119-residue protein sequence, read N- to C-terminus: Ribonuclease P protein component (119 aa).

The protein belongs to the RnpA family. Consists of a catalytic RNA component (M1 or rnpB) and a protein subunit.

The enzyme catalyses Endonucleolytic cleavage of RNA, removing 5'-extranucleotides from tRNA precursor.. RNaseP catalyzes the removal of the 5'-leader sequence from pre-tRNA to produce the mature 5'-terminus. It can also cleave other RNA substrates such as 4.5S RNA. The protein component plays an auxiliary but essential role in vivo by binding to the 5'-leader sequence and broadening the substrate specificity of the ribozyme. In Klebsiella pneumoniae (strain 342), this protein is Ribonuclease P protein component.